The following is a 317-amino-acid chain: DNA repair nuclease/redox regulator APEX1 (317 aa).

The tract at residues 1–32 (MPKRGKRAAAEDGEEPKSEPETKKSKGAAKKT) is necessary for interaction with YBX1, binding to RNA, association together with NPM1 to rRNA, endoribonuclease activity on abasic RNA and localization in the nucleoli. The disordered stretch occupies residues 1–57 (MPKRGKRAAAEDGEEPKSEPETKKSKGAAKKTEKEAAGEGPVLYEDPPDQKTSASGK). Lysine 6 is modified (N6-acetyllysine; by EP300). The Nuclear localization signal (NLS) signature appears at 8–12 (AAAED). Basic and acidic residues predominate over residues 15 to 37 (EPKSEPETKKSKGAAKKTEKEAA). Serine 18 bears the Phosphoserine mark. Residues 22 to 32 (TKKSKGAAKKT) are necessary for interaction with NPM1 and for efficient rRNA binding. Lysine 26, lysine 30, lysine 31, and lysine 34 each carry N6-acetyllysine. Phosphoserine is present on serine 53. A Nuclear export signal (NES) motif is present at residues 63-79 (ICSWNVDGLRAWIKKKG). S-nitrosocysteine; alternate is present on cysteine 64. Residues cysteine 64 and cysteine 92 are joined by a disulfide bond. Mg(2+) is bound at residue aspartate 69. S-nitrosocysteine; alternate is present on cysteine 92. Glutamate 95 lines the Mg(2+) pocket. Tyrosine 170 is a catalytic residue. An N6-acetyllysine modification is found at lysine 196. Positions 209 and 211 each coordinate Mg(2+). The active-site Proton donor/acceptor is aspartate 209. Position 232 is a phosphothreonine; by CDK5 (threonine 232). A mitochondrial targeting sequence (MTS) region spans residues 288–317 (HSLLPALCDSKIRSKALGSDHCPITLYLAL). Aspartate 307 is a binding site for Mg(2+). S-nitrosocysteine is present on cysteine 309.

This sequence belongs to the DNA repair enzymes AP/ExoA family. Monomer. Homodimer; disulfide-linked. Component of the SET complex, composed of at least APEX1, SET, ANP32A, HMGB2, NME1 and TREX1. Associates with the dimer XRCC5/XRCC6 in a DNA-dependent manner. Interacts with SIRT1; the interaction is increased in the context of genotoxic stress. Interacts with HDAC1, HDAC2 and HDAC3; the interactions are not dependent on the APEX1 acetylation status. Interacts with XRCC1; the interaction is induced by SIRT1 and increased with the APEX1 acetylated form. Interacts with NPM1 (via N-terminal domain); the interaction is RNA-dependent and decreases in hydrogen peroxide-damaged cells. Interacts (via N-terminus) with YBX1 (via C-terminus); the interaction is increased in presence of APEX1 acetylated. Interacts with HNRNPL; the interaction is DNA-dependent. Interacts (via N-terminus) with KPNA1 and KPNA2. Interacts with TXN; the interaction stimulates the FOS/JUN AP-1 complex DNA-binding activity in a redox-dependent manner. Interacts with GZMA, KRT8, MDM2, POLB, PRDX6, PRPF19, RPLP0, TOMM20 and WDR77. Binds to CDK5. The cofactor is Mg(2+). Mn(2+) serves as cofactor. Post-translationally, phosphorylated. Phosphorylation by kinase PKC or casein kinase CK2 results in enhanced redox activity that stimulates binding of the FOS/JUN AP-1 complex to its cognate binding site. AP-endodeoxyribonuclease activity is not affected by CK2-mediated phosphorylation. Phosphorylation of Thr-232 by CDK5 in response to MPP(+)/MPTP (1-methyl-4-phenylpyridinium) reduces AP-endodeoxyribonuclease activity resulting in accumulation of DNA damage and contributing to neuronal death. In terms of processing, acetylated on Lys-6. Acetylation is increased by the transcriptional coactivator EP300 acetyltransferase, genotoxic agents like H(2)O(2) and methyl methanesulfonate (MMS). Acetylation increases its binding affinity to the negative calcium response element (nCaRE) DNA promoter. The acetylated form induces a stronger binding of YBX1 to the Y-box sequence in the MDR1 promoter than the unacetylated form. Deacetylated on lysines. Lys-6 is deacetylated by SIRT1. Cleaved at Lys-30 by granzyme A to create the mitochondrial form; leading in reduction of binding to DNA, AP endodeoxyribonuclease activity, redox activation of transcription factors and to enhanced cell death. Cleaved by granzyme K; leading to intracellular ROS accumulation and enhanced cell death after oxidative stress. Post-translationally, cys-64 and Cys-92 are nitrosylated in response to nitric oxide (NO) and lead to the exposure of the nuclear export signal (NES). In terms of processing, ubiquitinated by MDM2; leading to translocation to the cytoplasm and proteasomal degradation.

It localises to the nucleus. It is found in the nucleolus. Its subcellular location is the nucleus speckle. The protein localises to the endoplasmic reticulum. The protein resides in the cytoplasm. It localises to the mitochondrion. It carries out the reaction a deoxyribonucleotide-2'-deoxyribose-5'-monophosphate-DNA + H2O = a 5'-end 2'-deoxyribose-5'-monophosphate-DNA + a 3'-end 2'-deoxyribonucleotide-DNA + H(+). The enzyme catalyses Exonucleolytic cleavage in the 3'- to 5'-direction to yield nucleoside 5'-phosphates.. It catalyses the reaction a 3'-end 2'-deoxyribonucleotide-3'-phosphoglycolate-DNA + H2O = 2-phosphoglycolate + a 3'-end 2'-deoxyribonucleotide-DNA + H(+). The catalysed reaction is a 3'-end 2'-deoxyribonucleotide-8-oxoguanine-DNA + H2O = 8-oxo-dGMP + a 3'-end 2'-deoxyribonucleotide-DNA + H(+). With respect to regulation, NPM1 stimulates endodeoxyribonuclease activity on double-stranded DNA with AP sites, but inhibits endoribonuclease activity on single-stranded RNA containing AP sites. Multifunctional protein that plays a central role in the cellular response to oxidative stress. The two major activities of APEX1 are DNA repair and redox regulation of transcriptional factors. Functions as an apurinic/apyrimidinic (AP) endodeoxyribonuclease in the base excision repair (BER) pathway of DNA lesions induced by oxidative and alkylating agents. Initiates repair of AP sites in DNA by catalyzing hydrolytic incision of the phosphodiester backbone immediately adjacent to the damage, generating a single-strand break with 5'-deoxyribose phosphate and 3'-hydroxyl ends. Also incises at AP sites in the DNA strand of DNA/RNA hybrids, single-stranded DNA regions of R-loop structures, and single-stranded RNA molecules. Operates at switch sites of immunoglobulin (Ig) constant regions where it mediates Ig isotype class switch recombination. Processes AP sites induced by successive action of AICDA and UNG. Generates staggered nicks in opposite DNA strands resulting in the formation of double-strand DNA breaks that are finally resolved via non-homologous end joining repair pathway. Has 3'-5' exodeoxyribonuclease activity on mismatched deoxyribonucleotides at the 3' termini of nicked or gapped DNA molecules during short-patch BER. Possesses DNA 3' phosphodiesterase activity capable of removing lesions (such as phosphoglycolate and 8-oxoguanine) blocking the 3' side of DNA strand breaks. Also acts as an endoribonuclease involved in the control of single-stranded RNA metabolism. Plays a role in regulating MYC mRNA turnover by preferentially cleaving in between UA and CA dinucleotides of the MYC coding region determinant (CRD). In association with NMD1, plays a role in the rRNA quality control process during cell cycle progression. Acts as a loading factor for POLB onto non-incised AP sites in DNA and stimulates the 5'-terminal deoxyribose 5'-phosphate (dRp) excision activity of POLB. Exerts reversible nuclear redox activity to regulate DNA binding affinity and transcriptional activity of transcriptional factors by controlling the redox status of their DNA-binding domain, such as the FOS/JUN AP-1 complex after exposure to IR. Involved in calcium-dependent down-regulation of parathyroid hormone (PTH) expression by binding to negative calcium response elements (nCaREs). Together with HNRNPL or the dimer XRCC5/XRCC6, associates with nCaRE, acting as an activator of transcriptional repression. May also play a role in the epigenetic regulation of gene expression by participating in DNA demethylation. Stimulates the YBX1-mediated MDR1 promoter activity, when acetylated at Lys-6 and Lys-7, leading to drug resistance. Plays a role in protection from granzyme-mediated cellular repair leading to cell death. Binds DNA and RNA. Associates, together with YBX1, on the MDR1 promoter. Together with NPM1, associates with rRNA. This chain is DNA repair nuclease/redox regulator APEX1 (Apex1), found in Rattus norvegicus (Rat).